A 338-amino-acid polypeptide reads, in one-letter code: NADPH dehydrogenase (338 aa).

23–26 is a binding site for FMN; the sequence is SPMC. Tyr28 is a binding site for substrate. 2 residues coordinate FMN: Ala60 and Gln102. 164 to 167 is a substrate binding site; the sequence is HGAH. Residues Arg215 and 307 to 308 contribute to the FMN site; that span reads GR.

The protein belongs to the NADH:flavin oxidoreductase/NADH oxidase family. NamA subfamily. As to quaternary structure, homotetramer. Requires FMN as cofactor.

It catalyses the reaction A + NADPH + H(+) = AH2 + NADP(+). Catalyzes the reduction of the double bond of an array of alpha,beta-unsaturated aldehydes and ketones. It also reduces the nitro group of nitroester and nitroaromatic compounds. It could have a role in detoxification processes. The sequence is that of NADPH dehydrogenase from Bacillus pumilus (strain SAFR-032).